The chain runs to 160 residues: Cytochrome b6-f complex subunit 4 (160 aa).

Helical transmembrane passes span 36-56 (LLYI…GLAV), 95-115 (LLGV…PFLE), and 131-151 (TVFL…TLPI).

This sequence belongs to the cytochrome b family. PetD subfamily. In terms of assembly, the 4 large subunits of the cytochrome b6-f complex are cytochrome b6, subunit IV (17 kDa polypeptide, petD), cytochrome f and the Rieske protein, while the 4 small subunits are petG, petL, petM and petN. The complex functions as a dimer.

The protein localises to the plastid. It is found in the chloroplast thylakoid membrane. In terms of biological role, component of the cytochrome b6-f complex, which mediates electron transfer between photosystem II (PSII) and photosystem I (PSI), cyclic electron flow around PSI, and state transitions. The polypeptide is Cytochrome b6-f complex subunit 4 (Pisum sativum (Garden pea)).